The primary structure comprises 690 residues: Elongation factor G (690 aa).

The region spanning 8 to 283 is the tr-type G domain; it reads EKYRNIGIMA…AVVDYLPSPL (276 aa). GTP-binding positions include 17-24, 81-85, and 135-138; these read AHIDAGKT, DTPGH, and NKLD.

Belongs to the TRAFAC class translation factor GTPase superfamily. Classic translation factor GTPase family. EF-G/EF-2 subfamily.

Its subcellular location is the cytoplasm. Its function is as follows. Catalyzes the GTP-dependent ribosomal translocation step during translation elongation. During this step, the ribosome changes from the pre-translocational (PRE) to the post-translocational (POST) state as the newly formed A-site-bound peptidyl-tRNA and P-site-bound deacylated tRNA move to the P and E sites, respectively. Catalyzes the coordinated movement of the two tRNA molecules, the mRNA and conformational changes in the ribosome. The sequence is that of Elongation factor G from Rhizorhabdus wittichii (strain DSM 6014 / CCUG 31198 / JCM 15750 / NBRC 105917 / EY 4224 / RW1) (Sphingomonas wittichii).